We begin with the raw amino-acid sequence, 488 residues long: Solute carrier family 41 member 3 (488 aa).

Basic and acidic residues-rich tracts occupy residues 1–19 and 27–36; these read MEGT…RLKE and DAGRLPKASE. Residues 1–36 are disordered; it reads MEGTEARQRRLEGCGRLKELGPLPSHDAGRLPKASE. A run of 9 helical transmembrane segments spans residues 63–83, 147–167, 189–209, 220–240, 251–271, 284–304, 377–397, 406–426, and 450–470; these read LIIG…LSWA, LAVV…ASLM, VITA…IVIG, IATP…LALM, WYLT…WLFI, YGWF…LILS, VLLF…CLVE, IFIL…LYLA, and GLGD…DWLL.

The protein belongs to the SLC41A transporter family.

The protein localises to the mitochondrion inner membrane. It carries out the reaction Mg(2+)(in) + 2 Na(+)(out) = Mg(2+)(out) + 2 Na(+)(in). In terms of biological role, na(+)/Mg(2+) ion exchanger that acts as a predominant Mg(2+) efflux system at the mitochondrial inner membrane. The sequence is that of Solute carrier family 41 member 3 (Slc41a3) from Mus musculus (Mouse).